A 677-amino-acid chain; its full sequence is Epithelial splicing regulatory protein 1 (677 aa).

RRM domains lie at 225-302 (TVVR…KATG), 326-406 (VIVR…RSTA), and 445-525 (DCVR…QCSA). Serine 543 is subject to Phosphoserine. Position 578 is an omega-N-methylarginine (arginine 578).

The protein belongs to the ESRP family.

The protein resides in the nucleus. In terms of biological role, mRNA splicing factor that regulates the formation of epithelial cell-specific isoforms. Specifically regulates the expression of FGFR2-IIIb, an epithelial cell-specific isoform of FGFR2. Also regulates the splicing of CD44, CTNND1, ENAH, 3 transcripts that undergo changes in splicing during the epithelial-to-mesenchymal transition (EMT). Acts by directly binding specific sequences in mRNAs. Binds the GU-rich sequence motifs in the ISE/ISS-3, a cis-element regulatory region present in the mRNA of FGFR2. Regulates splicing and expression of genes involved in inner ear development, auditory hair cell differentiation, and cell fate specification in the cochlear epithelium. This chain is Epithelial splicing regulatory protein 1 (Esrp1), found in Rattus norvegicus (Rat).